The sequence spans 260 residues: Lysozyme D (260 aa).

Positions M1–Q19 are cleaved as a signal peptide. The segment at G83–G148 is disordered. Composition is skewed to gly residues over residues S101 to T119 and S129 to S147.

This sequence belongs to the dictyostelium lysozyme family. Contains disulfide bonds.

The protein localises to the cytoplasmic vesicle lumen. It catalyses the reaction Hydrolysis of (1-&gt;4)-beta-linkages between N-acetylmuramic acid and N-acetyl-D-glucosamine residues in a peptidoglycan and between N-acetyl-D-glucosamine residues in chitodextrins.. Its function is as follows. Has antibacterial activity. This chain is Lysozyme D (alyD-1), found in Dictyostelium discoideum (Social amoeba).